The chain runs to 83 residues: Hainantoxin-III 2 (83 aa).

Positions 1-21 (MKASMYLALAGLVLLFVVGYA) are cleaved as a signal peptide. A propeptide spanning residues 22–48 (SESEEKEFPRELLSKIFAVDDFKGEER) is cleaved from the precursor. Disulfide bonds link Cys50–Cys65, Cys57–Cys70, and Cys64–Cys77. At Leu81 the chain carries Leucine amide.

It belongs to the neurotoxin 10 (Hwtx-1) family. 15 (Hntx-3) subfamily. In terms of assembly, monomer. In terms of tissue distribution, expressed by the venom gland.

The protein resides in the secreted. In terms of biological role, selective antagonist of neuronal tetrodotoxin (TTX)-sensitive voltage-gated sodium channels (IC(50)=1270 nM on Nav1.1/SCN1A, 270 nM on Nav1.2/SCN2A, 491 nM on Nav1.3/SCN3A and 232 nM on Nav1.7/SCN9A). This toxin suppress Nav1.7 current amplitude without significantly altering the activation, inactivation, and repriming kinetics. Short extreme depolarizations partially activate the toxin-bound channel, indicating voltage-dependent inhibition of this toxin. This toxin increases the deactivation of the Nav1.7 current after extreme depolarizations. The toxin-Nav1.7 complex is gradually dissociated upon prolonged strong depolarizations in a voltage-dependent manner, and the unbound toxin rebinds to Nav1.7 after a long repolarization. Moreover, analysis of chimeric channels showed that the DIIS3-S4 linker is critical for toxin binding to Nav1.7. These data are consistent with this toxin interacting with Nav1.7 site 4 and trapping the domain II voltage sensor in the closed state. The chain is Hainantoxin-III 2 from Cyriopagopus hainanus (Chinese bird spider).